The chain runs to 338 residues: Nickel transporter NixA (338 aa).

8 helical membrane passes run Trp11–Ile31, His37–Ala57, Gly79–Leu99, Phe127–Phe147, Val187–Leu207, Ala217–Leu237, Ile266–Leu286, and Tyr307–Trp327.

Belongs to the NiCoT transporter (TC 2.A.52) family.

The protein localises to the cell membrane. Functionally, secondary nickel transporter. Required for full urease activity. The sequence is that of Nickel transporter NixA from Staphylococcus aureus (strain NCTC 8325 / PS 47).